A 179-amino-acid polypeptide reads, in one-letter code: ATP synthase subunit delta (179 aa).

The protein belongs to the ATPase delta chain family. In terms of assembly, F-type ATPases have 2 components, F(1) - the catalytic core - and F(0) - the membrane proton channel. F(1) has five subunits: alpha(3), beta(3), gamma(1), delta(1), epsilon(1). F(0) has three main subunits: a(1), b(2) and c(10-14). The alpha and beta chains form an alternating ring which encloses part of the gamma chain. F(1) is attached to F(0) by a central stalk formed by the gamma and epsilon chains, while a peripheral stalk is formed by the delta and b chains.

It is found in the cell inner membrane. In terms of biological role, f(1)F(0) ATP synthase produces ATP from ADP in the presence of a proton or sodium gradient. F-type ATPases consist of two structural domains, F(1) containing the extramembraneous catalytic core and F(0) containing the membrane proton channel, linked together by a central stalk and a peripheral stalk. During catalysis, ATP synthesis in the catalytic domain of F(1) is coupled via a rotary mechanism of the central stalk subunits to proton translocation. This protein is part of the stalk that links CF(0) to CF(1). It either transmits conformational changes from CF(0) to CF(1) or is implicated in proton conduction. The protein is ATP synthase subunit delta of Anaeromyxobacter dehalogenans (strain 2CP-C).